Consider the following 617-residue polypeptide: Probable Xaa-Pro aminopeptidase P (617 aa).

The Mn(2+) site is built by Asp-414, Asp-425, Glu-523, and Glu-537.

This sequence belongs to the peptidase M24B family. Mn(2+) serves as cofactor.

It carries out the reaction Release of any N-terminal amino acid, including proline, that is linked to proline, even from a dipeptide or tripeptide.. In terms of biological role, catalyzes the removal of a penultimate prolyl residue from the N-termini of peptides. The sequence is that of Probable Xaa-Pro aminopeptidase P (AMPP) from Ajellomyces dermatitidis (strain ER-3 / ATCC MYA-2586) (Blastomyces dermatitidis).